Reading from the N-terminus, the 610-residue chain is Elongation factor 4 (610 aa).

The tr-type G domain occupies 11-193; sequence ENIRNFSIIA…QIVEKVPAPS (183 aa). GTP contacts are provided by residues 23–28 and 140–143; these read DHGKST and NKID.

This sequence belongs to the TRAFAC class translation factor GTPase superfamily. Classic translation factor GTPase family. LepA subfamily.

The protein localises to the cell membrane. The catalysed reaction is GTP + H2O = GDP + phosphate + H(+). Required for accurate and efficient protein synthesis under certain stress conditions. May act as a fidelity factor of the translation reaction, by catalyzing a one-codon backward translocation of tRNAs on improperly translocated ribosomes. Back-translocation proceeds from a post-translocation (POST) complex to a pre-translocation (PRE) complex, thus giving elongation factor G a second chance to translocate the tRNAs correctly. Binds to ribosomes in a GTP-dependent manner. This is Elongation factor 4 from Streptococcus equi subsp. equi (strain 4047).